The chain runs to 404 residues: Caspase-1 (404 aa).

In terms of domain architecture, CARD spans 1–91 (MADKVLKDKR…HLAQTLGLSS (91 aa)). A propeptide spanning residues 1–119 (MADKVLKDKR…SLPAFVENMP (119 aa)) is cleaved from the precursor. Residues histidine 237 and cysteine 285 contribute to the active site. The propeptide occupies 298 to 316 (SPKASTDSWTHQPLMLQSD). Residue serine 302 is modified to Phosphoserine.

The protein belongs to the peptidase C14A family. In terms of assembly, heterotetramer that consists of two anti-parallel arranged heterodimers, each one formed by a 20 kDa (Caspase-1 subunit p20) and a 10 kDa (Caspase-1 subunit p10) subunit. May be a component of the inflammasome, a protein complex which also includes PYCARD, CARD8 and NLRP2 and whose function would be the activation of pro-inflammatory caspases. Component of the AIM2 PANoptosome complex, a multiprotein complex that drives inflammatory cell death (PANoptosis). Both the p10 and p20 subunits interact with MEFV. Interacts with CARD17P/INCA and CARD18. Interacts with SERPINB1; this interaction regulates CASP1 activity. As to quaternary structure, heterotetramer that consists of two anti-parallel arranged heterodimers, each one formed by a 20 kDa (Caspase-1 subunit p20) and a 10 kDa (Caspase-1 subunit p10) subunit. The two subunits are derived from the precursor sequence by an autocatalytic mechanism. In terms of processing, ubiquitinated via 'Lys-11'-linked polyubiquitination. Deubiquitinated by USP8.

The protein localises to the cytoplasm. Its subcellular location is the cell membrane. The enzyme catalyses Strict requirement for an Asp residue at position P1 and has a preferred cleavage sequence of Tyr-Val-Ala-Asp-|-.. Functionally, thiol protease involved in a variety of inflammatory processes by proteolytically cleaving other proteins, such as the precursors of the inflammatory cytokines interleukin-1 beta (IL1B) and interleukin 18 (IL18) as well as the pyroptosis inducer Gasdermin-D (GSDMD), into active mature peptides. Plays a key role in cell immunity as an inflammatory response initiator: once activated through formation of an inflammasome complex, it initiates a pro-inflammatory response through the cleavage of the two inflammatory cytokines IL1B and IL18, releasing the mature cytokines which are involved in a variety of inflammatory processes. Cleaves a tetrapeptide after an Asp residue at position P1. Also initiates pyroptosis, a programmed lytic cell death pathway, through cleavage of GSDMD. In contrast to cleavage of interleukin IL1B, recognition and cleavage of GSDMD is not strictly dependent on the consensus cleavage site but depends on an exosite interface on CASP1 that recognizes and binds the Gasdermin-D, C-terminal (GSDMD-CT) part. Cleaves and activates CASP7 in response to bacterial infection, promoting plasma membrane repair. Upon inflammasome activation, during DNA virus infection but not RNA virus challenge, controls antiviral immunity through the cleavage of CGAS, rendering it inactive. In apoptotic cells, cleaves SPHK2 which is released from cells and remains enzymatically active extracellularly. This chain is Caspase-1 (CASP1), found in Canis lupus familiaris (Dog).